The sequence spans 209 residues: N-(5'-phosphoribosyl)anthranilate isomerase (209 aa).

This sequence belongs to the TrpF family.

It carries out the reaction N-(5-phospho-beta-D-ribosyl)anthranilate = 1-(2-carboxyphenylamino)-1-deoxy-D-ribulose 5-phosphate. The protein operates within amino-acid biosynthesis; L-tryptophan biosynthesis; L-tryptophan from chorismate: step 3/5. The chain is N-(5'-phosphoribosyl)anthranilate isomerase from Staphylococcus carnosus (strain TM300).